The sequence spans 432 residues: uncharacterized protein (432 aa).

SIS domains follow at residues 105-244 (WLTE…DLVS) and 277-422 (CDKK…VDLP).

This is an uncharacterized protein from Saccharomyces cerevisiae (strain Lalvin EC1118 / Prise de mousse) (Baker's yeast).